Reading from the N-terminus, the 503-residue chain is Efflux pump vrtL (503 aa).

The interval 1-59 is disordered; that stretch reads MSKLSDNHSSASEGEKEAGDLESGPTAISSEPSFDDADRDPNLITWDGPKDPENPKNWP. N-linked (GlcNAc...) asparagine glycosylation occurs at asparagine 7. Helical transmembrane passes span 68 to 88, 101 to 121, 133 to 153, 162 to 182, 194 to 214, 221 to 241, 295 to 315, 329 to 349, 377 to 397, 401 to 421, 432 to 454, and 471 to 491; these read WTVSLFVFISPVSSSMIAPAM, IEIYLSLSIFILAYSIGPIFF, LLQISNVWYLAWNLGCGFATT, FLAGIGGSAPLAIGGGAISDM, VYTLGPLLGPVVGPIAGGFIA, WVFWSTSAAALAVQVVGFFWL, IVFCMAIYMAYLFGISYLMFA, PGIGGLNYLSIAIGSFIGLFF, SLAVGSVISTIGLFWYGWSIG, WIMPNIGALIFAMGTISCLQG, TYAASAMAACAVLRSLCGFGFPL, and LLAFITMVVGWGAPFAFWHFG.

This sequence belongs to the major facilitator superfamily.

The protein resides in the membrane. Functionally, efflux pump; part of the gene cluster that mediates the biosynthesis of viridicatumtoxin, a tetracycline-like fungal meroterpenoid with a unique, fused spirobicyclic ring system. This chain is Efflux pump vrtL, found in Penicillium aethiopicum.